The sequence spans 565 residues: MTQSSAQGTRLDTQRTIRAPRGTQLRAKSWLTEAPLRMLMNNLDPDVAEHPHALVVYGGIGRAARNWECFDKIVEVLERLEDDQTLLVQSGKPVGVFPTHKNAPRVLIANSNLVPHWANWEHFNELDKQGLMMYGQMTAGSWIYIGSQGIVQGTYETFVAVAKKHFNGDAKGRWVLTGGLGGMGGAQPLAATMAGFSMIAVECDESRIDYRLRTGYVDKKANTLDEALAMIADTDRPISVGLLGNAADIFPELVKRNITPDVVTDQTSAHDPLNGYLPLGWSMEKAAQMRQQNEAEVVKAAKASMAIQVRAMLDLQTRGAATLDYGNNIRQMALEEGVANAFDFPGFVPAYIRPLFCEGIGPFRWAALSGDPEDIYKTDQKVKELIPDNPHLHNWLDMARERIHFQGLPARICWVGLKDRARLGLAFNEMVKNGELKAPIVIGRDHLDSGSVASPNRETEGMLDGSDAVSDWPLLNALLNTAGGATWVSLHHGGGVGMGFSQHSGMVICCDGSDDAAERIARVLHNDPATGVMRHADAGYEIAKRCAQQQKLDLPMLNAELAKLK.

NAD(+) is bound by residues 58-59 (GG), glutamine 136, 182-184 (GMG), glutamate 202, arginine 207, 245-246 (NA), 266-270 (QTSAH), 276-277 (YL), and tyrosine 325. The active site involves cysteine 413. Position 495 (glycine 495) interacts with NAD(+).

The protein belongs to the urocanase family. Requires NAD(+) as cofactor.

The protein localises to the cytoplasm. The catalysed reaction is 4-imidazolone-5-propanoate = trans-urocanate + H2O. It functions in the pathway amino-acid degradation; L-histidine degradation into L-glutamate; N-formimidoyl-L-glutamate from L-histidine: step 2/3. Its function is as follows. Catalyzes the conversion of urocanate to 4-imidazolone-5-propionate. In Vibrio cholerae serotype O1 (strain ATCC 39541 / Classical Ogawa 395 / O395), this protein is Urocanate hydratase.